A 471-amino-acid polypeptide reads, in one-letter code: ATP synthase subunit beta (471 aa).

156-163 lines the ATP pocket; sequence GGAGVGKT.

Belongs to the ATPase alpha/beta chains family. In terms of assembly, F-type ATPases have 2 components, CF(1) - the catalytic core - and CF(0) - the membrane proton channel. CF(1) has five subunits: alpha(3), beta(3), gamma(1), delta(1), epsilon(1). CF(0) has three main subunits: a(1), b(2) and c(9-12). The alpha and beta chains form an alternating ring which encloses part of the gamma chain. CF(1) is attached to CF(0) by a central stalk formed by the gamma and epsilon chains, while a peripheral stalk is formed by the delta and b chains.

The protein resides in the cell membrane. It carries out the reaction ATP + H2O + 4 H(+)(in) = ADP + phosphate + 5 H(+)(out). Functionally, produces ATP from ADP in the presence of a proton gradient across the membrane. The catalytic sites are hosted primarily by the beta subunits. In Macrococcus caseolyticus (strain JCSC5402) (Macrococcoides caseolyticum), this protein is ATP synthase subunit beta.